A 143-amino-acid chain; its full sequence is Large ribosomal subunit protein uL13 (143 aa).

This sequence belongs to the universal ribosomal protein uL13 family. As to quaternary structure, part of the 50S ribosomal subunit.

This protein is one of the early assembly proteins of the 50S ribosomal subunit, although it is not seen to bind rRNA by itself. It is important during the early stages of 50S assembly. The chain is Large ribosomal subunit protein uL13 from Variovorax paradoxus (strain S110).